We begin with the raw amino-acid sequence, 104 residues long: Large ribosomal subunit protein uL24 (104 aa).

This sequence belongs to the universal ribosomal protein uL24 family. Part of the 50S ribosomal subunit.

Functionally, one of two assembly initiator proteins, it binds directly to the 5'-end of the 23S rRNA, where it nucleates assembly of the 50S subunit. One of the proteins that surrounds the polypeptide exit tunnel on the outside of the subunit. This chain is Large ribosomal subunit protein uL24, found in Citrobacter koseri (strain ATCC BAA-895 / CDC 4225-83 / SGSC4696).